The sequence spans 223 residues: UPF0441 protein ETA_04310 (223 aa).

Residues 166–223 (YGAATPGRTMTVPKSALAPKPATTSTVTRGGFGESVAKQNTMQRNSSSTGSANRSMGG) form a disordered region. Polar residues predominate over residues 202–223 (AKQNTMQRNSSSTGSANRSMGG).

The protein belongs to the UPF0441 family.

The polypeptide is UPF0441 protein ETA_04310 (Erwinia tasmaniensis (strain DSM 17950 / CFBP 7177 / CIP 109463 / NCPPB 4357 / Et1/99)).